A 901-amino-acid polypeptide reads, in one-letter code: HTH-type transcriptional regulator MalT (901 aa).

39 to 46 (SPAGYGKT) contacts ATP. In terms of domain architecture, HTH luxR-type spans 829 to 894 (ELIHTSPLTQ…AAVQHAQKLL (66 aa)). Positions 853 to 872 (NEQIAGELEVAATTIKTHIR) form a DNA-binding region, H-T-H motif.

This sequence belongs to the MalT family. As to quaternary structure, monomer in solution. Oligomerizes to an active state in the presence of the positive effectors ATP and maltotriose.

Activated by ATP and maltotriose, which are both required for DNA binding. Its function is as follows. Positively regulates the transcription of the maltose regulon whose gene products are responsible for uptake and catabolism of malto-oligosaccharides. Specifically binds to the promoter region of its target genes, recognizing a short DNA motif called the MalT box. This Shigella sonnei (strain Ss046) protein is HTH-type transcriptional regulator MalT.